The primary structure comprises 583 residues: Atlastin-2 (583 aa).

Positions 1–44 (MAEGDEAARGQQPHQGLWRRRRTSDPSAAVNHVSSTTSLGENYE) are disordered. The N-terminal hypervariable region (HVR) stretch occupies residues 1-60 (MAEGDEAARGQQPHQGLWRRRRTSDPSAAVNHVSSTTSLGENYEDDDLVNSDEVMKKPCP). Topologically, residues 1–476 (MAEGDEAARG…NIFYAARTPA (476 aa)) are cytoplasmic. Ser24 is subject to Phosphoserine. One can recognise a GB1/RHD3-type G domain in the interval 91–336 (DLNIVVVSVA…LVPLLLAPEN (246 aa)). The GDP site is built by Arg104, Lys105, Gly106, Lys107, Ser108, Phe109, Gln175, Arg244, and Asp245. Residues Arg104, Lys105, Gly106, Lys107, Ser108, and Phe109 each contribute to the GTP site. A Mg(2+)-binding site is contributed by Ser108. GTP-binding residues include Arg244 and Asp245. Residues 256–284 (LEGGKQFLEKRLQVKQNQHEELQNVRKHI) adopt a coiled-coil conformation. Lys270 carries the post-translational modification N6-methyllysine. GDP-binding residues include Val303 and Asn306. Position 303 (Val303) interacts with GTP. A 3HB (three-helix bundle) domain region spans residues 374–465 (MLQATAEANN…YANFIKHNDG (92 aa)). The interval 466-474 (KNIFYAART) is linker. Residues 477-497 (TLFAVMFAMYIISGLTGFIGL) form a helical membrane-spanning segment. Topologically, residues 498 to 499 (NS) are lumenal. The chain crosses the membrane as a helical span at residues 500–520 (IAVLCNLVMGLALIFLCTWAY). Residues 521–583 (VKYSGEFREI…VSHHARLKTD (63 aa)) lie on the Cytoplasmic side of the membrane. Positions 547–583 (KPLGDNLMEENIRQSVTNSIKAGLTDQVSHHARLKTD) are autoinhibitory domain.

Belongs to the TRAFAC class dynamin-like GTPase superfamily. GB1/RHD3 GTPase family. GB1 subfamily. Monomeric and homodimeric. The homodimer, transiently formed by two molecules on opposing membranes, is the active form mediating ER membrane fusion. Interacts with REEP5 and RTN3; these proteins are involved in endoplasmic reticulum tubular network organization. Interacts with ZFYVE27; both proteins are involved in endoplasmic reticulum tubular network organization. As to expression, expressed in peripheral tissues (at protein level).

The protein resides in the endoplasmic reticulum membrane. It carries out the reaction GTP + H2O = GDP + phosphate + H(+). With respect to regulation, with its alternative C-terminus disrupting the autoinhibitory domain, this brain-specific isoform is probably more active at fusing ER membranes. Its function is as follows. Atlastin-2 (ATL2) is a membrane-anchored GTPase that mediates the GTP-dependent fusion of endoplasmic reticulum (ER) membranes, maintaining the continuous ER network. It facilitates the formation of three-way junctions where ER tubules intersect. Two atlastin-2 on neighboring ER tubules bind GTP and form loose homodimers through the GB1/RHD3-type G domains and 3HB regions. Upon GTP hydrolysis, the 3HB regions tighten, pulling the membranes together to drive their fusion. After fusion, the homodimer disassembles upon release of inorganic phosphate (Pi). Subsequently, GDP dissociates, resetting the monomers to a conformation ready for a new fusion cycle. This is Atlastin-2 from Homo sapiens (Human).